The following is a 401-amino-acid chain: Decapping and exoribonuclease protein (401 aa).

The disordered stretch occupies residues 1-27 (MEGNKSMQREKIDRPMKRGPEQNSLSP). Over residues 7–20 (MQREKIDRPMKRGP) the composition is skewed to basic and acidic residues. Residues Arg-69, Glu-114, and 149-151 (WRG) each bind substrate. Mg(2+) is bound at residue Glu-210. Cys-235 and Glu-252 together coordinate substrate. Mg(2+)-binding residues include Glu-252, Asp-254, Glu-271, and Leu-272. Positions 273 and 298 each coordinate substrate.

Belongs to the DXO/Dom3Z family. Mg(2+) serves as cofactor.

It is found in the nucleus. The enzyme catalyses a 5'-end triphospho-ribonucleoside in mRNA + H2O = a 5'-end phospho-ribonucleoside in mRNA + diphosphate + H(+). It catalyses the reaction a 5'-end NAD(+)-phospho-ribonucleoside in mRNA + H2O = a 5'-end phospho-ribonucleoside in mRNA + NAD(+) + H(+). It carries out the reaction a 5'-end NAD(+)-phospho-ribonucleoside in snoRNA + H2O = a 5'-end phospho-ribonucleoside in snoRNA + NAD(+) + H(+). The catalysed reaction is a 5'-end (N(7)-methyl 5'-triphosphoguanosine)-ribonucleoside-ribonucleotide in mRNA + H2O = a (N(7)-methyl 5'-triphosphoguanosine)-nucleoside + a 5'-end phospho-ribonucleoside in mRNA + H(+). The enzyme catalyses a 5'-end FAD-phospho-ribonucleoside in mRNA + H2O = a 5'-end phospho-ribonucleoside in mRNA + FAD + H(+). It catalyses the reaction a 5'-end CoA-ribonucleoside in mRNA + H2O = 3'-dephospho-CoA + a 5'-end phospho-ribonucleoside in mRNA + H(+). Decapping enzyme for NAD-capped RNAs: specifically hydrolyzes the nicotinamide adenine dinucleotide (NAD) cap from a subset of RNAs by removing the entire NAD moiety from the 5'-end of an NAD-capped RNA. The NAD-cap is present at the 5'-end of some RNAs and snoRNAs. In contrast to the canonical 5'-end N7 methylguanosine (m7G) cap, the NAD cap promotes mRNA decay. Also acts as a non-canonical decapping enzyme that removes the entire cap structure of m7G capped or incompletely capped RNAs and mediates their subsequent degradation. Specifically degrades pre-mRNAs with a defective 5'-end m7G cap and is part of a pre-mRNA capping quality control. Has decapping activity toward incomplete 5'-end m7G cap mRNAs such as unmethylated 5'-end-capped RNA (cap0), while it has no activity toward 2'-O-ribose methylated m7G cap (cap1). Also has 5'-3' exoribonuclease activities: The 5'-end monophosphate RNA is then degraded by the 5'-3' exoribonuclease activity, enabling this enzyme to decap and degrade incompletely capped mRNAs. Also possesses RNA 5'-pyrophosphohydrolase activity by hydrolyzing the 5'-end triphosphate to release pyrophosphates. Exhibits decapping activity towards FAD-capped RNAs. Exhibits decapping activity towards dpCoA-capped RNAs in vitro. The protein is Decapping and exoribonuclease protein of Xenopus laevis (African clawed frog).